A 724-amino-acid polypeptide reads, in one-letter code: Probable dipeptidyl-peptidase 5 (724 aa).

The signal sequence occupies residues 1 to 19 (MGALTWLSVVAAAASTALA). Asparagine 76, asparagine 97, asparagine 154, asparagine 257, asparagine 383, and asparagine 453 each carry an N-linked (GlcNAc...) asparagine glycan. The active-site Charge relay system is serine 563. Asparagine 610 carries an N-linked (GlcNAc...) asparagine glycan. Catalysis depends on charge relay system residues aspartate 646 and histidine 678.

It belongs to the peptidase S9C family.

It is found in the secreted. Functionally, extracellular dipeptidyl-peptidase which removes N-terminal dipeptides sequentially from polypeptides having unsubstituted N-termini. The protein is Probable dipeptidyl-peptidase 5 (dpp5) of Aspergillus clavatus (strain ATCC 1007 / CBS 513.65 / DSM 816 / NCTC 3887 / NRRL 1 / QM 1276 / 107).